Reading from the N-terminus, the 313-residue chain is Aspartate carbamoyltransferase catalytic subunit (313 aa).

Carbamoyl phosphate-binding residues include Arg-59 and Thr-60. Lys-87 is a binding site for L-aspartate. 3 residues coordinate carbamoyl phosphate: Arg-109, His-137, and Gln-140. Arg-170 and Arg-224 together coordinate L-aspartate. The carbamoyl phosphate site is built by Gly-265 and Pro-266.

The protein belongs to the aspartate/ornithine carbamoyltransferase superfamily. ATCase family. In terms of assembly, heterododecamer (2C3:3R2) of six catalytic PyrB chains organized as two trimers (C3), and six regulatory PyrI chains organized as three dimers (R2).

The enzyme catalyses carbamoyl phosphate + L-aspartate = N-carbamoyl-L-aspartate + phosphate + H(+). It functions in the pathway pyrimidine metabolism; UMP biosynthesis via de novo pathway; (S)-dihydroorotate from bicarbonate: step 2/3. Functionally, catalyzes the condensation of carbamoyl phosphate and aspartate to form carbamoyl aspartate and inorganic phosphate, the committed step in the de novo pyrimidine nucleotide biosynthesis pathway. The polypeptide is Aspartate carbamoyltransferase catalytic subunit (Agrobacterium fabrum (strain C58 / ATCC 33970) (Agrobacterium tumefaciens (strain C58))).